The following is a 220-amino-acid chain: Splicing factor U2AF 26 kDa subunit (220 aa).

A2 bears the N-acetylalanine mark. The segment at 12-40 adopts a C3H1-type 1 zinc-finger fold; sequence EKDKVNCSFYFKIGACRHGDRCSRLHNKP. Residues 65-147 enclose the RRM domain; that stretch reads SHCHVSDVEV…QAVHAELSPV (83 aa). The segment at 149 to 176 adopts a C3H1-type 2 zinc-finger fold; that stretch reads DFRESCCRQYEMGECTRGGFCNFMHLRP. Residues 186 to 220 are disordered; the sequence is YGRGPRHRSPPRSHTGHRPRERNRRRSPDHRHGRF. Residues 189 to 220 are compositionally biased toward basic residues; that stretch reads GPRHRSPPRSHTGHRPRERNRRRSPDHRHGRF.

Belongs to the splicing factor SR family. As to quaternary structure, interacts with GFI1, U2AF2 and C1QBP. Isoform 3 interacts with PER1. Post-translationally, isoform 3 is rapidly degraded by a proteasome-mediated degradation pathway. As to expression, ubiquitous. Highly expressed in the brain.

It is found in the nucleus. The protein resides in the nucleus speckle. The protein localises to the cytoplasm. Functionally, RNA-binding protein that function as a pre-mRNA splicing factor. Plays a critical role in both constitutive and enhancer-dependent splicing by mediating protein-protein interactions and protein-RNA interactions required for accurate 3'-splice site selection. It can functionally substitute for U2AF1 in constitutive splicing and enhancer-dependent splicing. Acts by enhancing the binding of U2AF2 to weak pyrimidine tracts. Also participates in the regulation of alternative pre-mRNA splicing. Activates exon 5 skipping of PTPRC during T-cell activation; an event reversed by GFI1. Binds to RNA at the AG dinucleotide at the 3'-splice site. Shows a preference for AGC or AGA. Alternative splicing of U2AF1L4 may play a role in connecting the circadian rhythm to changing external cues: may provide a circadian buffering system in central and periphery clocks that allows synchronized adaption to clock-resetting stimuli in order to prevent potentially pathogenic desynchronization. The sequence is that of Splicing factor U2AF 26 kDa subunit (U2af1l4) from Mus musculus (Mouse).